Consider the following 349-residue polypeptide: GDSL esterase/lipase At2g19050 (349 aa).

A signal peptide spans 1 to 23 (MAEAIFKALLLVIATTAFATTEA). Residue Ser38 is the Nucleophile of the active site. N-linked (GlcNAc...) asparagine glycosylation occurs at Asn49. Catalysis depends on residues Asp316 and His319.

Belongs to the 'GDSL' lipolytic enzyme family.

It is found in the secreted. In Arabidopsis thaliana (Mouse-ear cress), this protein is GDSL esterase/lipase At2g19050.